We begin with the raw amino-acid sequence, 246 residues long: Homeobox protein SIX6 (246 aa).

The homeobox DNA-binding region spans 128–187; the sequence is GEQKTHCFKERTRHLLREWYLQDPYPNPSKKRELAQATGLTPTQVGNWFKNRRQRDRAAA. Positions 190–246 are disordered; the sequence is NRLQQQVLSQGSGRALRAEGDGTPEVLGVATSPAASLSSKAATSAISITSSDSECDI. Residues 191–201 show a composition bias toward polar residues; it reads RLQQQVLSQGS. Threonine 212 carries the post-translational modification Phosphothreonine. Low complexity predominate over residues 219 to 246; that stretch reads ATSPAASLSSKAATSAISITSSDSECDI. Serine 221, serine 225, serine 227, and serine 228 each carry phosphoserine.

This sequence belongs to the SIX/Sine oculis homeobox family. As to quaternary structure, interacts with TLE4 and TLE5. In terms of tissue distribution, expressed in the developing and adult retina. Also expressed in the hypothalamic and the pituitary regions.

The protein localises to the nucleus. Functionally, may be involved in eye development. The protein is Homeobox protein SIX6 (SIX6) of Homo sapiens (Human).